Here is a 498-residue protein sequence, read N- to C-terminus: Cysteine--tRNA ligase (498 aa).

Cysteine 44 serves as a coordination point for Zn(2+). Residues 46–56 (PTVYSDAHLGH) carry the 'HIGH' region motif. Residues cysteine 235, histidine 260, and glutamate 264 each coordinate Zn(2+). A 'KMSKS' region motif is present at residues 291–295 (KMSKS). Lysine 294 is a binding site for ATP.

Belongs to the class-I aminoacyl-tRNA synthetase family. In terms of assembly, monomer. Zn(2+) is required as a cofactor.

Its subcellular location is the cytoplasm. The catalysed reaction is tRNA(Cys) + L-cysteine + ATP = L-cysteinyl-tRNA(Cys) + AMP + diphosphate. This is Cysteine--tRNA ligase (cysS) from Deinococcus radiodurans (strain ATCC 13939 / DSM 20539 / JCM 16871 / CCUG 27074 / LMG 4051 / NBRC 15346 / NCIMB 9279 / VKM B-1422 / R1).